The following is a 488-amino-acid chain: N-succinylglutamate 5-semialdehyde dehydrogenase 2 (488 aa).

221 to 226 serves as a coordination point for NAD(+); the sequence is GSSNTG. Active-site residues include Glu244 and Cys278.

The protein belongs to the aldehyde dehydrogenase family. AstD subfamily.

It carries out the reaction N-succinyl-L-glutamate 5-semialdehyde + NAD(+) + H2O = N-succinyl-L-glutamate + NADH + 2 H(+). Its pathway is amino-acid degradation; L-arginine degradation via AST pathway; L-glutamate and succinate from L-arginine: step 4/5. Catalyzes the NAD-dependent reduction of succinylglutamate semialdehyde into succinylglutamate. This is N-succinylglutamate 5-semialdehyde dehydrogenase 2 from Pseudoalteromonas translucida (strain TAC 125).